The following is a 273-amino-acid chain: Aquaporin NIP1-4 (273 aa).

The next 2 helical transmembrane spans lie at 59-79 (LLAE…AITV) and 86-106 (VTFP…VYAV). An NPA 1 motif is present at residues 115-117 (NPA). Transmembrane regions (helical) follow at residues 133-155 (APAY…RLMF), 174-194 (SLVI…AVAT), and 198-218 (AVGH…VLFA). Residues 227–229 (NPA) carry the NPA 2 motif. A helical transmembrane segment spans residues 245 to 265 (WVYILGPFAGAAAGAWAYSLI).

Belongs to the MIP/aquaporin (TC 1.A.8) family. NIP (TC 1.A.8.12) subfamily. In terms of tissue distribution, expressed in leaves.

It localises to the membrane. Its function is as follows. Aquaporins facilitate the transport of water and small neutral solutes across cell membranes. The chain is Aquaporin NIP1-4 (NIP1-4) from Oryza sativa subsp. japonica (Rice).